Here is a 97-residue protein sequence, read N- to C-terminus: Citrate lyase acyl carrier protein (97 aa).

S14 is subject to O-(phosphoribosyl dephospho-coenzyme A)serine.

This sequence belongs to the CitD family. As to quaternary structure, oligomer with a subunit composition of (alpha,beta,gamma)6.

The protein resides in the cytoplasm. Covalent carrier of the coenzyme of citrate lyase. The protein is Citrate lyase acyl carrier protein of Oenococcus oeni (strain ATCC BAA-331 / PSU-1).